The sequence spans 200 residues: Shikimate kinase (200 aa).

33–38 (GAGKST) lines the ATP pocket. Ser37 lines the Mg(2+) pocket. Residues Asp55, Arg79, and Gly101 each contribute to the substrate site. Residue Arg139 participates in ATP binding. Arg158 lines the substrate pocket.

It belongs to the shikimate kinase family. Monomer. Requires Mg(2+) as cofactor.

Its subcellular location is the cytoplasm. It catalyses the reaction shikimate + ATP = 3-phosphoshikimate + ADP + H(+). It participates in metabolic intermediate biosynthesis; chorismate biosynthesis; chorismate from D-erythrose 4-phosphate and phosphoenolpyruvate: step 5/7. Catalyzes the specific phosphorylation of the 3-hydroxyl group of shikimic acid using ATP as a cosubstrate. The chain is Shikimate kinase from Brucella abortus (strain S19).